We begin with the raw amino-acid sequence, 125 residues long: METVFTEKAPKPVGPYSQAIKVGNTLYVSGQIPIDPRTNEIVKGDIKVQTRQVLDNIKEIVKAAGFSLSDVAMAFVFLKDMNMFNDFNSVYAEYFKDKPPARVTVEVSRLPKDALIEIAVICSKG.

The protein belongs to the RutC family.

The chain is RutC family protein STK_08110 from Sulfurisphaera tokodaii (strain DSM 16993 / JCM 10545 / NBRC 100140 / 7) (Sulfolobus tokodaii).